The sequence spans 397 residues: MSESVHTNTSLWSKGMKAVIVAQFLSAFGDNALLFATLALLKAQFYPEWSQPILQMVFVGAYILFAPFVGQVADSFAKGRVMMFANGLKLLGAASICFGINPFLGYTLVGVGAAAYSPAKYGILGELTTGSKLVKANGLMEASTIAAILLGSVAGGVLADWHVLVALAACALAYGGAVVANIYIPKLAAARPGQSWNLINMTRSFLNACTSLWRNGETRFSLVGTSLFWGAGVTLRFLLVLWVPVALGITDNATPTYLNAMVAIGIVVGAGAAAKLVTLETVSRCMPAGILIGVVVLIFSLQHELLPAYALLMLIGVMGGFFVVPLNALLQERGKKSVGAGNAIAVQNLGENSAMLLMLGIYSLAVMVGIPVVPIGIGFGALFALAITALWIWQRRH.

Over 1–17 (MSESVHTNTSLWSKGMK) the chain is Periplasmic. Residues 18–38 (AVIVAQFLSAFGDNALLFATL) form a helical membrane-spanning segment. Over 39–52 (ALLKAQFYPEWSQP) the chain is Cytoplasmic. Residues 53 to 73 (ILQMVFVGAYILFAPFVGQVA) form a helical membrane-spanning segment. Over 74–90 (DSFAKGRVMMFANGLKL) the chain is Periplasmic. The chain crosses the membrane as a helical span at residues 91 to 111 (LGAASICFGINPFLGYTLVGV). Residues 112-144 (GAAAYSPAKYGILGELTTGSKLVKANGLMEAST) are Cytoplasmic-facing. Residues 145 to 165 (IAAILLGSVAGGVLADWHVLV) traverse the membrane as a helical segment. Position 166 (A166) is a topological domain, periplasmic. The chain crosses the membrane as a helical span at residues 167 to 187 (LAACALAYGGAVVANIYIPKL). The Cytoplasmic segment spans residues 188 to 226 (AAARPGQSWNLINMTRSFLNACTSLWRNGETRFSLVGTS). The chain crosses the membrane as a helical span at residues 227–247 (LFWGAGVTLRFLLVLWVPVAL). Topologically, residues 248–256 (GITDNATPT) are periplasmic. Residues 257–277 (YLNAMVAIGIVVGAGAAAKLV) traverse the membrane as a helical segment. Residues 278–280 (TLE) lie on the Cytoplasmic side of the membrane. Residues 281–301 (TVSRCMPAGILIGVVVLIFSL) form a helical membrane-spanning segment. At 302 to 304 (QHE) the chain is on the periplasmic side. The chain crosses the membrane as a helical span at residues 305–325 (LLPAYALLMLIGVMGGFFVVP). The Cytoplasmic segment spans residues 326–343 (LNALLQERGKKSVGAGNA). Residues 344 to 364 (IAVQNLGENSAMLLMLGIYSL) traverse the membrane as a helical segment. The Periplasmic segment spans residues 365 to 366 (AV). Residues 367–387 (MVGIPVVPIGIGFGALFALAI) traverse the membrane as a helical segment. The Cytoplasmic segment spans residues 388-397 (TALWIWQRRH).

Belongs to the major facilitator superfamily. LplT (TC 2.A.1.42) family.

Its subcellular location is the cell inner membrane. Functionally, catalyzes the facilitated diffusion of 2-acyl-glycero-3-phosphoethanolamine (2-acyl-GPE) into the cell. This is Lysophospholipid transporter LplT from Escherichia coli (strain ATCC 8739 / DSM 1576 / NBRC 3972 / NCIMB 8545 / WDCM 00012 / Crooks).